Consider the following 386-residue polypeptide: MTSYLSDYVQQIKPSGIRKFFDLAATMEGVISLGVGEPDFVTAWNVREASILSLEQGYTSYTANAGLYSLREEISRYLSNRFDLSYSPDNELIVTVGASQALDIAIRAIVNPGEEVIIPEPCFVAYDALVSLAGGIPVHVHTTADKGFKATAADFEAAVTEKTKAILICSPSNPTGSVYSKEELNEIAEFAKKHDVIVLADEIYAELTYDEEFTSIAALPGMKERTVVISGFSKAFAMTGWRLGFAAAPSLLRDAMLKIHQYAMMCAPAMAQFAALEGLKNGMEDVEKMKKSYRRRRNLFVESLNEIGLSCHHPGGAFYAFPSIKSMGMSSEQFAEELLTQEKVAVVPGSVFGPSGEGYIRCSYATSIEQLQEALVRMKRFLHKTT.

Position 234 is an N6-(pyridoxal phosphate)lysine (K234).

It belongs to the class-I pyridoxal-phosphate-dependent aminotransferase family. The cofactor is pyridoxal 5'-phosphate.

It is found in the cytoplasm. The chain is Putative aminotransferase YugH (yugH) from Bacillus subtilis (strain 168).